The following is a 57-amino-acid chain: uncharacterized protein (57 aa).

Residues 9–45 (NWQEEIRKIIIERVRREAKKRLLEETRKLRMEMKSSK) adopt a coiled-coil conformation.

This is an uncharacterized protein from Archaeoglobus fulgidus (strain ATCC 49558 / DSM 4304 / JCM 9628 / NBRC 100126 / VC-16).